Here is a 901-residue protein sequence, read N- to C-terminus: Aconitate hydratase A (901 aa).

The [4Fe-4S] cluster site is built by Cys-443, Cys-509, and Cys-512.

It belongs to the aconitase/IPM isomerase family. Monomer. The cofactor is [4Fe-4S] cluster.

The enzyme catalyses citrate = D-threo-isocitrate. It carries out the reaction (2S,3R)-3-hydroxybutane-1,2,3-tricarboxylate = 2-methyl-cis-aconitate + H2O. It functions in the pathway carbohydrate metabolism; tricarboxylic acid cycle; isocitrate from oxaloacetate: step 2/2. It participates in organic acid metabolism; propanoate degradation. Its function is as follows. Involved in the catabolism of short chain fatty acids (SCFA) via the tricarboxylic acid (TCA)(acetyl degradation route) and probably the 2-methylcitrate cycle I (propionate degradation route). Catalyzes the reversible isomerization of citrate to isocitrate via cis-aconitate. Could catalyze the hydration of 2-methyl-cis-aconitate to yield (2R,3S)-2-methylisocitrate. The apo form of AcnA functions as a RNA-binding regulatory protein. In Staphylococcus epidermidis (strain ATCC 35984 / DSM 28319 / BCRC 17069 / CCUG 31568 / BM 3577 / RP62A), this protein is Aconitate hydratase A (acnA).